Reading from the N-terminus, the 185-residue chain is Large ribosomal subunit protein eL19 (185 aa).

Positions 152 to 185 (SDKLTSQQEARRAKNTASRAKRNEKAQIVAKVDV) are disordered.

Belongs to the eukaryotic ribosomal protein eL19 family.

This chain is Large ribosomal subunit protein eL19 (RPL19), found in Tetrahymena thermophila (strain SB210).